A 249-amino-acid polypeptide reads, in one-letter code: 2,3-bisphosphoglycerate-dependent phosphoglycerate mutase (249 aa).

Substrate is bound by residues 9–16 (RHGQSQWN), 22–23 (TG), arginine 61, 88–91 (ERHY), lysine 99, 115–116 (RR), and 184–185 (GN). The Tele-phosphohistidine intermediate role is filled by histidine 10. Glutamate 88 (proton donor/acceptor) is an active-site residue.

This sequence belongs to the phosphoglycerate mutase family. BPG-dependent PGAM subfamily. As to quaternary structure, homodimer.

It catalyses the reaction (2R)-2-phosphoglycerate = (2R)-3-phosphoglycerate. The protein operates within carbohydrate degradation; glycolysis; pyruvate from D-glyceraldehyde 3-phosphate: step 3/5. Functionally, catalyzes the interconversion of 2-phosphoglycerate and 3-phosphoglycerate. The chain is 2,3-bisphosphoglycerate-dependent phosphoglycerate mutase from Xylella fastidiosa (strain M12).